Reading from the N-terminus, the 293-residue chain is Probable mediator of RNA polymerase II transcription subunit 15b (293 aa).

Belongs to the plant Mediator complex subunit 15 family. As to quaternary structure, component of the Mediator complex.

The protein localises to the nucleus. Component of the Mediator complex, a coactivator involved in the regulated transcription of nearly all RNA polymerase II-dependent genes. Mediator functions as a bridge to convey information from gene-specific regulatory proteins to the basal RNA polymerase II transcription machinery. The Mediator complex, having a compact conformation in its free form, is recruited to promoters by direct interactions with regulatory proteins and serves for the assembly of a functional preinitiation complex with RNA polymerase II and the general transcription factors. The polypeptide is Probable mediator of RNA polymerase II transcription subunit 15b (MED15B) (Arabidopsis thaliana (Mouse-ear cress)).